The following is a 160-amino-acid chain: Cytochrome b6-f complex subunit 4 (160 aa).

Helical transmembrane passes span 36-56 (LLYIFPVVIFGTFACVIGLSV), 95-115 (LLGVLLMAAVPAGLLTVPFIE), and 131-151 (TVFLIGTVAAIWLGIGAALPI).

Belongs to the cytochrome b family. PetD subfamily. The 4 large subunits of the cytochrome b6-f complex are cytochrome b6, subunit IV (17 kDa polypeptide, petD), cytochrome f and the Rieske protein, while the 4 small subunits are petG, petL, petM and petN. The complex functions as a dimer.

Its subcellular location is the plastid. It is found in the chloroplast thylakoid membrane. Its function is as follows. Component of the cytochrome b6-f complex, which mediates electron transfer between photosystem II (PSII) and photosystem I (PSI), cyclic electron flow around PSI, and state transitions. This is Cytochrome b6-f complex subunit 4 from Chlorella vulgaris (Green alga).